A 284-amino-acid chain; its full sequence is MKLDGYTRLAAVVANPIKHSISPFIHNRAFEATATNGAYVAWEIEASDLVETVANIRRYQMFGINLSMPYKEQVIPYLDKLSDEARLIGAVNTVVNENGNLIGYNTDGKGFFKCLPSFTISGKKMTLLGAGGAAKSILAQAILDGVSQISVFVRSVSMEKTRPYLDKLQEQTGFKVDLCALEYVSELQARIAESDLLVNATSVGMDGQSSPVPENIVLPETLLVADIIYQPFETPFLKWARSQGNPAVNGLGMLLYQAAEAFQLWTGKEMPTEEIWQSLTEKYQ.

Residues 20–22 (SIS) and S67 contribute to the shikimate site. The active-site Proton acceptor is the K71. NADP(+) is bound at residue D83. Residues N92 and D107 each coordinate shikimate. NADP(+) contacts are provided by residues 129–133 (GAGGA) and I227. Y229 contacts shikimate. G250 lines the NADP(+) pocket.

The protein belongs to the shikimate dehydrogenase family. Homodimer.

It carries out the reaction shikimate + NADP(+) = 3-dehydroshikimate + NADPH + H(+). The protein operates within metabolic intermediate biosynthesis; chorismate biosynthesis; chorismate from D-erythrose 4-phosphate and phosphoenolpyruvate: step 4/7. Its function is as follows. Involved in the biosynthesis of the chorismate, which leads to the biosynthesis of aromatic amino acids. Catalyzes the reversible NADPH linked reduction of 3-dehydroshikimate (DHSA) to yield shikimate (SA). This chain is Shikimate dehydrogenase (NADP(+)), found in Streptococcus pneumoniae serotype 2 (strain D39 / NCTC 7466).